A 344-amino-acid chain; its full sequence is C-C chemokine receptor-like 2 (344 aa).

Residues 1–43 lie on the Extracellular side of the membrane; sequence MANYTLAPEDEYDVLIEGELESDEAEQCDRYDTWALSAQLVPS. The N-linked (GlcNAc...) asparagine glycan is linked to Asn-3. Residues 44–64 traverse the membrane as a helical segment; sequence LCSAVFVVGVLDNLLVVLILV. The Cytoplasmic portion of the chain corresponds to 65–74; the sequence is KYKGLKRVEN. The helical transmembrane segment at 75-95 threads the bilayer; the sequence is IYLLNLAVSNLCFLLTLPFWA. Topologically, residues 96–104 are extracellular; the sequence is HAGGDPMCK. A disulfide bridge connects residues Cys-103 and Cys-181. The chain crosses the membrane as a helical span at residues 105-125; the sequence is ILIGLYFVGLYSETFFNCLLT. The Cytoplasmic segment spans residues 126–148; it reads LQRYLVFLHKGNFFSVRRRVPCG. Residues 149-169 form a helical membrane-spanning segment; it reads IVTSAVAWVTAILATVPEFAV. The Extracellular portion of the chain corresponds to 170–198; it reads YKPQMEDPKYKCAFSRTPFLPADETFWKH. Residues 199–219 traverse the membrane as a helical segment; that stretch reads FLTLKMNVSVLVFPLFIFTFL. The Cytoplasmic segment spans residues 220-238; it reads YVQMRKTLRFGEQRYSLFK. The chain crosses the membrane as a helical span at residues 239–259; sequence LVFAIMVVFLLMWAPYNIALF. The Extracellular portion of the chain corresponds to 260 to 281; sequence LSTFKEHFSLSDCKSNYNLDKS. A helical membrane pass occupies residues 282-302; sequence VLITKLIATTHCCVNPLLYVF. The Cytoplasmic segment spans residues 303–344; it reads LDGTFRKYLCRFFHRRSNTPRQPRRRFAQGTSREEPDRSTEV. A disordered region spans residues 323-344; it reads RQPRRRFAQGTSREEPDRSTEV. Residues 334 to 344 are compositionally biased toward basic and acidic residues; the sequence is SREEPDRSTEV.

Belongs to the G-protein coupled receptor 1 family.

It is found in the cell membrane. Its function is as follows. Receptor for CCL19 and chemerin/RARRES2. Does not appear to be a signaling receptor, but may have a role in modulating chemokine-triggered immune responses by capturing and internalizing CCL19 or by presenting RARRES2 ligand to CMKLR1, a functional signaling receptor. Plays a critical role for the development of Th2 responses. The chain is C-C chemokine receptor-like 2 (CCRL2) from Macaca mulatta (Rhesus macaque).